The sequence spans 289 residues: Serine/threonine-protein phosphatase Pgam5, mitochondrial (289 aa).

This sequence belongs to the phosphoglycerate mutase family. BPG-dependent PGAM subfamily. In terms of assembly, interacts with Pk92B/ASK1.

The protein localises to the mitochondrion outer membrane. The catalysed reaction is O-phospho-L-seryl-[protein] + H2O = L-seryl-[protein] + phosphate. It catalyses the reaction O-phospho-L-threonyl-[protein] + H2O = L-threonyl-[protein] + phosphate. Functionally, displays phosphatase activity for serine/threonine residues, and dephosphorylates and activates Pk92B kinase. Has apparently no phosphoglycerate mutase activity. In Drosophila yakuba (Fruit fly), this protein is Serine/threonine-protein phosphatase Pgam5, mitochondrial.